The chain runs to 509 residues: Type II methyltransferase M.BsoBI (509 aa).

It belongs to the N(4)/N(6)-methyltransferase family. N(4) subfamily.

It carries out the reaction a 2'-deoxycytidine in DNA + S-adenosyl-L-methionine = an N(4)-methyl-2'-deoxycytidine in DNA + S-adenosyl-L-homocysteine + H(+). Its function is as follows. An alpha subtype methylase that recognizes the double-stranded sequence 5'-CYCGRG-3', methylates C-1 on both strands, and protects the DNA from cleavage by the BsoBI endonuclease. This chain is Type II methyltransferase M.BsoBI, found in Geobacillus stearothermophilus (Bacillus stearothermophilus).